A 420-amino-acid polypeptide reads, in one-letter code: Transcription factor IIIB 50 kDa subunit (420 aa).

Residues 3-36 (NGSRCPDCGSSELVEDSHYSQSQLVCSDCGCVVT) form a TFIIB-type zinc finger. Zn(2+) is bound by residues cysteine 7, cysteine 10, cysteine 28, and cysteine 31. Tandem repeats lie at residues 72–157 (DLRR…MQMV) and 173–249 (VKSY…SLAQ). Residues 108-114 (AARLQKK) are interaction with target DNA. The segment at 316 to 387 (TAEVETQQQQ…AVTGDEDISD (72 aa)) is disordered. A compositionally biased stretch (low complexity) spans 322–336 (QQQQQQQQGQGQGQQ). Serine 354 carries the post-translational modification Phosphoserine. Residues 358 to 364 (LLPPCML) are required for the formation of a ternary complex with DNA and TBP; not required for interaction with TBP in the absence of DNA. Cysteine 362 bears the Cysteine sulfenic acid (-SOH) mark. A required for interaction with TBP and formation of a ternary complex with DNA and TBP region spans residues 366–420 (PPKRTHTLPPESAVTGDEDISDSEIEQYLRTPQEVRDFERAQAASQAAMRVPNPP).

This sequence belongs to the TFIIB family. As to quaternary structure, component of TFIIIB complexes. The TFIIIB complex has two activities, alpha and beta. The TFIIIB-alpha activity complex is composed of TBP, BDP1, and a complex containing both BRF2 and at least four stably associated proteins; this complex inhibits the transcription by pol III via its phosphorylation by CK2; YY1 facilitates the TFIIIB-alpha complex formation. Interacts with TBP; this interaction promotes recruitment of BRF2 to TATA box-containing promoters. Interacts with TBP and the BURE sequence (GC-rich sequence downstream from the TATA box) to form a strong ternary complex which is joined by BDP1; this ternary complex stimulates pol III transcription. Forms a trimeric complex composed of TBP, BRF2 and mini-SNAPc complex (SNAP43, SNAP50, and the N-terminal third of SNAP190) on the promoter. Assembly of the TBP-BRF2 complex is stimulated by SNAP190. Interacts with MAF1 and SNAPC4. Post-translationally, in response to oxidative stress, Cys-362 is reversibly oxidized to cysteine sulfenic acid. Oxidation of Cys-362 impairs formation of a ternary complex with TBP and DNA and down-regulates expression of target genes in response to oxidative stress.

The protein localises to the nucleus. Its function is as follows. General activator of RNA polymerase III transcription. Factor exclusively required for RNA polymerase III transcription of genes with promoter elements upstream of the initiation sites. Contributes to the regulation of gene expression; functions as activator in the absence of oxidative stress. Down-regulates expression of target genes in response to oxidative stress. Overexpression protects cells against apoptosis in response to oxidative stress. The polypeptide is Transcription factor IIIB 50 kDa subunit (Brf2) (Mus musculus (Mouse)).